We begin with the raw amino-acid sequence, 430 residues long: Adenylosuccinate synthetase (430 aa).

Residues 13–19 and 41–43 each bind GTP; these read GDEGKGK and GHT. The Proton acceptor role is filled by Asp14. Mg(2+) is bound by residues Asp14 and Gly41. IMP contacts are provided by residues 14-17, 39-42, Thr130, Arg144, Gln225, Thr240, and Arg304; these read DEGK and NAGH. Residue His42 is the Proton donor of the active site. Substrate is bound at residue 300-306; the sequence is ATTGRAR. GTP is bound by residues Arg306, 332-334, and 414-416; these read KLD and STG.

This sequence belongs to the adenylosuccinate synthetase family. Homodimer. The cofactor is Mg(2+).

Its subcellular location is the cytoplasm. It catalyses the reaction IMP + L-aspartate + GTP = N(6)-(1,2-dicarboxyethyl)-AMP + GDP + phosphate + 2 H(+). Its pathway is purine metabolism; AMP biosynthesis via de novo pathway; AMP from IMP: step 1/2. Plays an important role in the de novo pathway of purine nucleotide biosynthesis. Catalyzes the first committed step in the biosynthesis of AMP from IMP. In Pseudomonas paraeruginosa (strain DSM 24068 / PA7) (Pseudomonas aeruginosa (strain PA7)), this protein is Adenylosuccinate synthetase.